Consider the following 175-residue polypeptide: Adenine phosphoribosyltransferase (175 aa).

The protein belongs to the purine/pyrimidine phosphoribosyltransferase family. In terms of assembly, homodimer.

It localises to the cytoplasm. It carries out the reaction AMP + diphosphate = 5-phospho-alpha-D-ribose 1-diphosphate + adenine. Its pathway is purine metabolism; AMP biosynthesis via salvage pathway; AMP from adenine: step 1/1. Its function is as follows. Catalyzes a salvage reaction resulting in the formation of AMP, that is energically less costly than de novo synthesis. The polypeptide is Adenine phosphoribosyltransferase (Francisella philomiragia subsp. philomiragia (strain ATCC 25017 / CCUG 19701 / FSC 153 / O#319-036)).